The following is a 621-amino-acid chain: Chaperone protein HscA homolog (621 aa).

Belongs to the heat shock protein 70 family.

Functionally, chaperone involved in the maturation of iron-sulfur cluster-containing proteins. Has a low intrinsic ATPase activity which is markedly stimulated by HscB. This Cupriavidus taiwanensis (strain DSM 17343 / BCRC 17206 / CCUG 44338 / CIP 107171 / LMG 19424 / R1) (Ralstonia taiwanensis (strain LMG 19424)) protein is Chaperone protein HscA homolog.